Reading from the N-terminus, the 281-residue chain is 4-diphosphocytidyl-2-C-methyl-D-erythritol kinase (281 aa).

Residue Lys-15 is part of the active site. Residue 98-108 (PTGAGLGGGSS) coordinates ATP. Residue Asp-140 is part of the active site.

Belongs to the GHMP kinase family. IspE subfamily.

The catalysed reaction is 4-CDP-2-C-methyl-D-erythritol + ATP = 4-CDP-2-C-methyl-D-erythritol 2-phosphate + ADP + H(+). The protein operates within isoprenoid biosynthesis; isopentenyl diphosphate biosynthesis via DXP pathway; isopentenyl diphosphate from 1-deoxy-D-xylulose 5-phosphate: step 3/6. Its function is as follows. Catalyzes the phosphorylation of the position 2 hydroxy group of 4-diphosphocytidyl-2C-methyl-D-erythritol. The chain is 4-diphosphocytidyl-2-C-methyl-D-erythritol kinase from Neisseria meningitidis serogroup A / serotype 4A (strain DSM 15465 / Z2491).